The primary structure comprises 414 residues: Esterase FrsA (414 aa).

It belongs to the FrsA family.

It carries out the reaction a carboxylic ester + H2O = an alcohol + a carboxylate + H(+). Functionally, catalyzes the hydrolysis of esters. In Salmonella choleraesuis (strain SC-B67), this protein is Esterase FrsA.